Here is a 96-residue protein sequence, read N- to C-terminus: MDKPKQSFRRHFKPIRRRFKPIRRYLKPIRRHLSPIRSGDRIDYKNMSLISRFISEQGKILSGRVNRLTSKQQRLMTNAIKRARILSLLPFLYNEN.

This sequence belongs to the bacterial ribosomal protein bS18 family. As to quaternary structure, part of the 30S ribosomal subunit.

It localises to the plastid. The protein resides in the chloroplast. The chain is Small ribosomal subunit protein bS18c (rps18) from Pinus thunbergii (Japanese black pine).